A 560-amino-acid chain; its full sequence is Formate--tetrahydrofolate ligase (560 aa).

Thr-69–Ser-76 is an ATP binding site.

This sequence belongs to the formate--tetrahydrofolate ligase family.

It catalyses the reaction (6S)-5,6,7,8-tetrahydrofolate + formate + ATP = (6R)-10-formyltetrahydrofolate + ADP + phosphate. The protein operates within one-carbon metabolism; tetrahydrofolate interconversion. The polypeptide is Formate--tetrahydrofolate ligase (Listeria monocytogenes serotype 4a (strain HCC23)).